The primary structure comprises 362 residues: Leucoanthocyanidin dioxygenase (362 aa).

Residues 211-313 (MEELLLQKKI…RISWAVFCEP (103 aa)) enclose the Fe2OG dioxygenase domain. Residues histidine 238, aspartate 240, and histidine 294 each coordinate Fe cation.

It belongs to the iron/ascorbate-dependent oxidoreductase family. Requires Fe cation as cofactor. L-ascorbate serves as cofactor.

The catalysed reaction is a (2R,3S,4S)-leucoanthocyanidin + 2-oxoglutarate + O2 = a 4-H-anthocyanidin with a 3-hydroxy group + succinate + CO2 + 2 H2O. The protein operates within pigment biosynthesis; anthocyanin biosynthesis. Its function is as follows. Oxidation of leucoanthocyanidins into anthocyanidins. The sequence is that of Leucoanthocyanidin dioxygenase from Vitis vinifera (Grape).